The chain runs to 624 residues: ADP,ATP carrier protein 1, chloroplastic (624 aa).

A chloroplast-targeting transit peptide spans 1–79 (MEAVIQTRGL…KERSTEFICK (79 aa)). An N-acetylalanine modification is found at Ala80. 6 helical membrane-spanning segments follow: residues 108-128 (VEVA…CILF), 182-202 (ALFY…GFVM), 240-260 (LFYV…FWGF), 315-335 (AMMS…WWVN), 446-466 (LLTG…APLV), and 545-565 (LANS…AWLA). Positions 579 to 624 (SEEELEKEMERASSVKIPVVSQDESGNGSLGESPSSSPEKSAPTNL) are disordered. Over residues 602–624 (ESGNGSLGESPSSSPEKSAPTNL) the composition is skewed to low complexity.

Belongs to the ADP/ATP translocase tlc (TC 2.A.12.2) family.

It localises to the plastid. Its subcellular location is the chloroplast membrane. Functionally, may function as an ATP importer. This Arabidopsis thaliana (Mouse-ear cress) protein is ADP,ATP carrier protein 1, chloroplastic (AATP1).